The following is a 123-amino-acid chain: Small ribosomal subunit protein uS13 (123 aa).

The segment at 95–123 is disordered; it reads GLPVRGQRTKTNARTRKGPIKTVGAKRKK.

The protein belongs to the universal ribosomal protein uS13 family. As to quaternary structure, part of the 30S ribosomal subunit. Forms a loose heterodimer with protein S19. Forms two bridges to the 50S subunit in the 70S ribosome.

In terms of biological role, located at the top of the head of the 30S subunit, it contacts several helices of the 16S rRNA. In the 70S ribosome it contacts the 23S rRNA (bridge B1a) and protein L5 of the 50S subunit (bridge B1b), connecting the 2 subunits; these bridges are implicated in subunit movement. Contacts the tRNAs in the A and P-sites. The sequence is that of Small ribosomal subunit protein uS13 from Desulfitobacterium hafniense (strain DSM 10664 / DCB-2).